Reading from the N-terminus, the 306-residue chain is Pantothenate kinase (306 aa).

91-98 (GSVAVGKS) contacts ATP.

It belongs to the prokaryotic pantothenate kinase family.

Its subcellular location is the cytoplasm. The enzyme catalyses (R)-pantothenate + ATP = (R)-4'-phosphopantothenate + ADP + H(+). It participates in cofactor biosynthesis; coenzyme A biosynthesis; CoA from (R)-pantothenate: step 1/5. The polypeptide is Pantothenate kinase (Streptococcus pneumoniae (strain Hungary19A-6)).